Consider the following 256-residue polypeptide: Trans-aconitate 2-methyltransferase (256 aa).

Belongs to the methyltransferase superfamily. Tam family.

It is found in the cytoplasm. The catalysed reaction is trans-aconitate + S-adenosyl-L-methionine = (E)-3-(methoxycarbonyl)pent-2-enedioate + S-adenosyl-L-homocysteine. Functionally, catalyzes the S-adenosylmethionine monomethyl esterification of trans-aconitate. This Rhizobium leguminosarum bv. trifolii (strain WSM2304) protein is Trans-aconitate 2-methyltransferase.